The following is a 563-amino-acid chain: Urocanate hydratase (563 aa).

NAD(+)-binding positions include Gly53–Gly54, Gln131, Gly177–Gly179, Glu197, Arg202, Asn243–Ala244, Gln264–His268, Tyr274–Leu275, and Tyr323. Cys411 is a catalytic residue. Gly493 contacts NAD(+).

Belongs to the urocanase family. The cofactor is NAD(+).

It is found in the cytoplasm. The catalysed reaction is 4-imidazolone-5-propanoate = trans-urocanate + H2O. Its pathway is amino-acid degradation; L-histidine degradation into L-glutamate; N-formimidoyl-L-glutamate from L-histidine: step 2/3. In terms of biological role, catalyzes the conversion of urocanate to 4-imidazolone-5-propionate. This is Urocanate hydratase from Yersinia enterocolitica serotype O:8 / biotype 1B (strain NCTC 13174 / 8081).